The chain runs to 199 residues: Inducible T-cell costimulator (199 aa).

A signal peptide spans 1–20 (MKSGLWYFFLFCLRIKVLTG). The Extracellular portion of the chain corresponds to 21-140 (EINGSANYEM…YESQLCCQLK (120 aa)). One can recognise an Ig-like V-type domain in the interval 30–132 (MFIFHNGGVQ…LTGGYLHIYE (103 aa)). 2 cysteine pairs are disulfide-bonded: Cys42/Cys109 and Cys63/Cys83. Asn89 and Asn110 each carry an N-linked (GlcNAc...) asparagine glycan. Residues 141–161 (FWLPIGCAAFVVVCILGCILI) form a helical membrane-spanning segment. Residues 162-199 (CWLTKKKYSSSVHDPNGEYMFMRAVNTAKKSRLTDVTL) are Cytoplasmic-facing.

As to quaternary structure, homodimer; disulfide-linked. Interacts with ICOSLG. Interacts with PIK3R1. Interacts with TBK1; this interaction is critical for the maturation of T follicular regulatory cells. In terms of processing, N-glycosylated. In terms of tissue distribution, activated T-cells. Highly expressed on tonsillar T-cells, which are closely associated with B-cells in the apical light zone of germinal centers, the site of terminal B-cell maturation. Expressed at lower levels in thymus, lung, lymph node and peripheral blood leukocytes. Expressed in the medulla of fetal and newborn thymus.

It localises to the cell membrane. It is found in the secreted. Stimulatory receptor expressed in activated or antigen-experienced T-cells that plays an important role in the immune response. Upon binding to its ligand ICOSL expressed on antigen presenting cells (APCs), delivers costimulatory signals that enhances all basic T-cell responses to a foreign antigen, namely proliferation, secretion of lymphokines including IL10, up-regulation of molecules that mediate cell-cell interaction, and effective help for antibody secretion by B-cells. Also acts as a costimulatory receptor critical for the differentiation of T follicular regulatory cells upon immune challenges such as viral infection. Mechanistically, potentiates TCR-induced calcium flux by augmenting PLCG1 activation and actin remodeling. In addition, activates PI3K signaling pathways independently of calcium flux. Essential both for efficient interaction between T and B-cells and for normal antibody responses to T-cell dependent antigens. Prevents the apoptosis of pre-activated T-cells. Plays a critical role in CD40-mediated class switching of immunoglobin isotypes. The chain is Inducible T-cell costimulator (ICOS) from Homo sapiens (Human).